Here is a 272-residue protein sequence, read N- to C-terminus: uncharacterized protein (272 aa).

The protein belongs to the sodium:galactoside symporter (TC 2.A.2) family.

This is an uncharacterized protein from Pseudescherichia vulneris (Escherichia vulneris).